The sequence spans 316 residues: Arginase-1 (316 aa).

The disordered stretch occupies residues 1–26 (MAKERHSVGVIGAPFSKGQPRRGVEE). The Mn(2+) site is built by H101, D124, H126, and D128. Residues 126–130 (HADIN), 137–139 (CGN), and D183 contribute to the substrate site. 2 residues coordinate Mn(2+): D232 and D234. T246 is a substrate binding site.

The protein belongs to the arginase family. As to quaternary structure, homotrimer. Mn(2+) serves as cofactor. In terms of tissue distribution, strongest expression in liver.

The enzyme catalyses L-arginine + H2O = urea + L-ornithine. It participates in nitrogen metabolism; urea cycle; L-ornithine and urea from L-arginine: step 1/1. The chain is Arginase-1 (arg1) from Xenopus laevis (African clawed frog).